A 708-amino-acid chain; its full sequence is O-antigen chain terminator bifunctional methyltransferase/kinase WbdD (708 aa).

The methyltransferase stretch occupies residues 1 to 210 (MTKDLNTLVS…VPRPMYLVSN (210 aa)). S-adenosyl-L-methionine is bound by residues 16–17 (YQ), Arg-36, Gly-61, 82–87 (DFQQEN), 108–111 (GRIE), and Leu-128. Residues 211 to 459 (HRVLINDFNQ…AKLPSAEQQR (249 aa)) are kinase. ATP contacts are provided by residues Pro-229, His-237, 241-243 (RRY), Lys-252, Glu-274, 309-311 (EKL), Met-358, and Asp-369. A coiled-coil region spans residues 485–594 (AGSEALRGQI…EIEKIHRSRS (110 aa)). Positions 601–669 (YRYLGLQIHL…RLYRRMNPLP (69 aa)) are required for membrane-binding. The tract at residues 687 to 708 (VMHPELLPPEVYEIYLKLTKNK) is required for localizing WbdA to the membrane.

The protein belongs to the WbdD family. As to quaternary structure, interacts with WbdA.

The protein resides in the cell inner membrane. The enzyme catalyses 3-O-phospho-alpha-D-Man-(1-&gt;2)-alpha-D-Man-(1-&gt;2)-[alpha-D-Man-(1-&gt;3)-alpha-D-Man-(1-&gt;3)-alpha-D-Man-(1-&gt;2)-alpha-D-Man-(1-&gt;2)](n)-alpha-D-Man-(1-&gt;3)-alpha-D-Man-(1-&gt;3)-alpha-D-Man-(1-&gt;3)-alpha-D-GlcNAc-di-trans,octa-cis-undecaprenyl diphosphate + S-adenosyl-L-methionine = 3-O-methylphospho-alpha-D-Man-(1-&gt;2)-alpha-D-Man-(1-&gt;2)-[alpha-D-Man-(1-&gt;3)-alpha-D-Man-(1-&gt;3)-alpha-D-Man-(1-&gt;2)-alpha-D-Man-(1-&gt;2)](n)-alpha-D-Man-(1-&gt;3)-alpha-D-Man-(1-&gt;3)-alpha-D-Man-(1-&gt;3)-alpha-D-GlcNAc-di-trans,octa-cis-undecaprenyl diphosphate + S-adenosyl-L-homocysteine. The catalysed reaction is alpha-D-Man-(1-&gt;2)-alpha-D-Man-(1-&gt;2)-[alpha-D-Man-(1-&gt;3)-alpha-D-Man-(1-&gt;3)-alpha-D-Man-(1-&gt;2)-alpha-D-Man-(1-&gt;2)](n)-alpha-D-Man-(1-&gt;3)-alpha-D-Man-(1-&gt;3)-alpha-D-Man-(1-&gt;3)-alpha-D-GlcNAc-di-trans,octa-cis-undecaprenyl diphosphate + ATP = 3-O-phospho-alpha-D-Man-(1-&gt;2)-alpha-D-Man-(1-&gt;2)-[alpha-D-Man-(1-&gt;3)-alpha-D-Man-(1-&gt;3)-alpha-D-Man-(1-&gt;2)-alpha-D-Man-(1-&gt;2)](n)-alpha-D-Man-(1-&gt;3)-alpha-D-Man-(1-&gt;3)-alpha-D-Man-(1-&gt;3)-alpha-D-GlcNAc-di-trans,octa-cis-undecaprenyl diphosphate + ADP + H(+). It participates in bacterial outer membrane biogenesis; LPS O-antigen biosynthesis. In terms of biological role, regulates the length of the LPS O-antigen polysaccharide chain. Stops the polymerization of the chain by phosphorylating and then methylating the phosphate on the terminal sugar. This terminal modification is essential for export of the O-antigen across the inner membrane. WbdD is also required for correct localization of the WbdA mannosyltransferase. This is O-antigen chain terminator bifunctional methyltransferase/kinase WbdD from Escherichia coli.